The sequence spans 530 residues: Equilibrative nucleoside transporter 4 (530 aa).

A disordered region spans residues 1–21 (MGSVGSQRLEEPSVAGTPDPG). Topologically, residues 1–68 (MGSVGSQRLE…DEPVPDDRYH (68 aa)) are extracellular. A helical transmembrane segment spans residues 69–89 (AIYFAMLLAGVGFLLPYNSFI). Residues 90–101 (TDVDYLHHKYPG) are Cytoplasmic-facing. The helical transmembrane segment at 102 to 122 (TSIVFDMSLTYILVALAAVLL) threads the bilayer. Residues 123–139 (NNVLVERLTLHTRITAG) lie on the Extracellular side of the membrane. Residues 140 to 160 (YLLALGPLLFISICDVWLQLF) traverse the membrane as a helical segment. Over 161-166 (SRDQAY) the chain is Cytoplasmic. The chain crosses the membrane as a helical span at residues 167-187 (AINLAAVGTVAFGCTVQQSSF). Residues 188 to 231 (YGYTGMLPKRYTQGVMTGESTAGVMISLSRILTKLLLPDERAST) lie on the Extracellular side of the membrane. A helical membrane pass occupies residues 232–252 (LIFFLVSVALELLCFLLHLLV). Residues 253 to 351 (RRSRFVLFYT…LLLHRYVVAR (99 aa)) lie on the Cytoplasmic side of the membrane. Residues 352–372 (VIWADMLSIAVTYFITLCLFP) form a helical membrane-spanning segment. The Extracellular portion of the chain corresponds to 373-381 (GLESEIRHC). Residues 382-402 (ILGEWLPILIMAVFNLSDFVG) traverse the membrane as a helical segment. Residues 403–416 (KILAALPVDWRGTH) lie on the Cytoplasmic side of the membrane. A helical transmembrane segment spans residues 417–437 (LLACSCLRVVFIPLFILCVYP). At 438–450 (SGMPALRHPAWPC) the chain is on the extracellular side. Residues 451–471 (IFSLLMGISNGYFGSVPMILA) form a helical membrane-spanning segment. The Cytoplasmic portion of the chain corresponds to 472-486 (AGKVSPKQRELAGNT). A helical transmembrane segment spans residues 487–509 (MTVSYMSGLTLGSAVAYCTYSLT). The Extracellular segment spans residues 510-530 (RDAHGSCLHASTANGSILAGL). N-linked (GlcNAc...) asparagine glycosylation is present at asparagine 523.

It belongs to the SLC29A/ENT transporter (TC 2.A.57) family. In terms of processing, N-glycosylated. As to expression, mainly expressed in brain and skeletal muscle. In brain, expressed in cerebellum, cerebral cortex, medulla oblongata, occipital pole, frontal and temporal lobes putamen, spinal cord, substancia nigra, hippocampus, caudate nucleus, nucleus accumbens, pons and choroid plexus. Expressed in heart, in both cardiomyocytes and vascular endothelial cells. Also expressed in adrenal gland, small intestine, pancreas, kidney, liver, bone marrow, lymph node. Located in endometrial stroma, where the expression is high in the proliferative phase, decreases during the secretory phase, and is no longer detectable in the menstrual phase.

Its subcellular location is the cell membrane. The protein localises to the apical cell membrane. The catalysed reaction is serotonin(out) = serotonin(in). It carries out the reaction dopamine(out) = dopamine(in). It catalyses the reaction (R)-noradrenaline(out) = (R)-noradrenaline(in). The enzyme catalyses (R)-adrenaline(out) = (R)-adrenaline(in). The catalysed reaction is histamine(out) = histamine(in). It carries out the reaction tyramine(in) = tyramine(out). It catalyses the reaction guanidine(out) = guanidine(in). The enzyme catalyses adenosine(in) = adenosine(out). Activated at acidic pH. Its function is as follows. Electrogenic voltage-dependent transporter that mediates the transport of a variety of endogenous bioactive amines, cationic xenobiotics and drugs. Utilizes the physiologic inside-negative membrane potential as a driving force to facilitate cellular uptake of organic cations. Functions as a Na(+)- and Cl(-)-independent bidirectional transporter. Substrate transport is pH-dependent and enhanced under acidic condition, which is most likely the result of allosteric changes in the transporter structure. Implicated in monoamine neurotransmitters uptake such as serotonin, dopamine, adrenaline/epinephrine, noradrenaline/norepinephrine, histamine and tyramine, thereby supporting a role in homeostatic regulation of aminergic neurotransmission in the central nervous system. Also responsible for the uptake of bioactive amines and drugs through the blood-cerebrospinal fluid (CSF) barrier, from the CSF into choroid plexus epithelial cells, thereby playing a significant role in the clearance of cationic neurotoxins, xenobiotics and metabolic waste in the brain. Involved in bidirectional transport of the purine nucleoside adenosine and plays a role in the regulation of extracellular adenosine concentrations in cardiac tissues, in particular during ischemia. May be involved in organic cation uptake from the tubular lumen into renal tubular cells, thereby contributing to organic cation reabsorption in the kidney. Also transports guanidine. The protein is Equilibrative nucleoside transporter 4 of Homo sapiens (Human).